Here is a 372-residue protein sequence, read N- to C-terminus: Probable G-protein coupled receptor 45 (372 aa).

The Extracellular segment spans residues 1-38; the sequence is MACNSTSLEAYTYLLLNTSNASDSGSTQLPAPLRISLA. 3 N-linked (GlcNAc...) asparagine glycosylation sites follow: Asn4, Asn17, and Asn20. Residues 39 to 59 traverse the membrane as a helical segment; sequence IVMLLMTVVGFLGNTVVCIIV. At 60–75 the chain is on the cytoplasmic side; sequence YQRPAMRSAINLLLAT. The chain crosses the membrane as a helical span at residues 76–96; sequence LAFSDIMLSLCCMPFTAVTLI. At 97-109 the chain is on the extracellular side; that stretch reads TVRWHFGDHFCRL. A helical transmembrane segment spans residues 110–130; sequence SATLYWFFVLEGVAILLIISV. Over 131 to 149 the chain is Cytoplasmic; that stretch reads DRFLIIVQRQDKLNPRRAK. The helical transmembrane segment at 150–170 threads the bilayer; the sequence is VIIAVSWVLSFCIAGPSLTGW. Residues 171–198 are Extracellular-facing; the sequence is TLVEVPARAPQCVLGYTELPADRAYVVT. A helical transmembrane segment spans residues 199-219; the sequence is LVVAVFFAPFGVMLCAYMCIL. At 220–268 the chain is on the cytoplasmic side; sequence NTVRKNAVRVHNQSDSLDLRQLTRAGLRRLQRQQQVSVDLSFKTKAFTT. A helical transmembrane segment spans residues 269-289; the sequence is ILILFVGFSLCWLPHSVYSLL. Residues 290–305 are Extracellular-facing; that stretch reads SVFSQRFYCGSSFYAT. The helical transmembrane segment at 306 to 326 threads the bilayer; it reads STCVLWLSYLKSVFNPIVYCW. Residues 327-372 lie on the Cytoplasmic side of the membrane; that stretch reads RIKKFREACIELLPQTFQILPKVPERIRRRIQPSTVYVCNENQSAV.

This sequence belongs to the G-protein coupled receptor 1 family. Expressed in brain; detected in the basal forebrain, frontal cortex, and caudate, but not in thalamus, hippocampus, or putamen.

Its subcellular location is the cell membrane. In terms of biological role, orphan receptor. May play a role in brain function. This Homo sapiens (Human) protein is Probable G-protein coupled receptor 45 (GPR45).